Reading from the N-terminus, the 146-residue chain is Large ribosomal subunit protein uL15 (146 aa).

A compositionally biased stretch (basic and acidic residues) spans 1-13 (MKLHELKPAEGSR). The disordered stretch occupies residues 1-51 (MKLHELKPAEGSRKVRNRVGRGTSSGNGKTSGRGQKGQKARSGGGVRLGFE). Gly residues-rich tracts occupy residues 23 to 35 (TSSG…GRGQ) and 42 to 51 (SGGGVRLGFE).

The protein belongs to the universal ribosomal protein uL15 family. As to quaternary structure, part of the 50S ribosomal subunit.

In terms of biological role, binds to the 23S rRNA. The sequence is that of Large ribosomal subunit protein uL15 from Streptococcus pneumoniae serotype 2 (strain D39 / NCTC 7466).